Consider the following 101-residue polypeptide: MAKVSLIKKNESRKKKSQSLHNKRVALKSKIYDKNISLEERFSLVMLLAQLPRNSSPTRIRNRCELTGRPRGVTRKFGISRNKLRELIGRGVVPGVVKSSW.

Positions 1 to 21 (MAKVSLIKKNESRKKKSQSLH) are disordered. A compositionally biased stretch (basic residues) spans 11–21 (ESRKKKSQSLH).

The protein belongs to the universal ribosomal protein uS14 family. Part of the 30S ribosomal subunit. Contacts proteins S3 and S10.

In terms of biological role, binds 16S rRNA, required for the assembly of 30S particles and may also be responsible for determining the conformation of the 16S rRNA at the A site. The chain is Small ribosomal subunit protein uS14 from Rickettsia canadensis (strain McKiel).